Consider the following 427-residue polypeptide: DNA topoisomerase 6 subunit A (427 aa).

The Topo IIA-type catalytic domain occupies 76-209 (LSLSSVQTEI…LNVIAAEKGV (134 aa)). The active-site O-(5'-phospho-DNA)-tyrosine intermediate is Tyr170. 2 residues coordinate Mg(2+): Glu256 and Asp308.

Belongs to the TOP6A family. As to quaternary structure, homodimer. Heterotetramer of two TOP6A and two TOP6B subunits. Interacts with BIN4 and RHL1. Mg(2+) serves as cofactor. Highly expressed in leaves, stems, flowers and seedlings.

Its subcellular location is the nucleus. The enzyme catalyses ATP-dependent breakage, passage and rejoining of double-stranded DNA.. In terms of biological role, component of the DNA topoisomerase VI involved in chromatin organization and progression of endoreduplication cycles. Relaxes both positive and negative superturns and exhibits a strong decatenase activity. Involved in cell-elongation processes. The polypeptide is DNA topoisomerase 6 subunit A (Arabidopsis thaliana (Mouse-ear cress)).